Here is a 284-residue protein sequence, read N- to C-terminus: Pseudouridine-5'-phosphate glycosidase (284 aa).

Glutamate 8 (proton donor) is an active-site residue. Substrate is bound by residues lysine 69 and valine 89. Aspartate 119 lines the Mn(2+) pocket. Position 121 to 123 (121 to 123 (SQD)) interacts with substrate. Lysine 140 functions as the Nucleophile in the catalytic mechanism.

This sequence belongs to the pseudouridine-5'-phosphate glycosidase family. As to quaternary structure, homotrimer. Mn(2+) is required as a cofactor.

The catalysed reaction is D-ribose 5-phosphate + uracil = psi-UMP + H2O. In terms of biological role, catalyzes the reversible cleavage of pseudouridine 5'-phosphate (PsiMP) to ribose 5-phosphate and uracil. Functions biologically in the cleavage direction, as part of a pseudouridine degradation pathway. In Pseudothermotoga lettingae (strain ATCC BAA-301 / DSM 14385 / NBRC 107922 / TMO) (Thermotoga lettingae), this protein is Pseudouridine-5'-phosphate glycosidase.